Consider the following 428-residue polypeptide: Elongation factor 1-alpha (428 aa).

Positions 5–215 (KPHINIVFIG…ALDQMPEPPK (211 aa)) constitute a tr-type G domain. A G1 region spans residues 14 to 21 (GHVDHGKS). 14–21 (GHVDHGKS) contributes to the GTP binding site. S21 is a Mg(2+) binding site. Positions 68–72 (GITID) are G2. The G3 stretch occupies residues 89-92 (DAPG). Residues 89 to 93 (DAPGH) and 144 to 147 (NKMD) each bind GTP. Residues 144–147 (NKMD) form a G4 region. Residues 181–183 (SAW) are G5.

Belongs to the TRAFAC class translation factor GTPase superfamily. Classic translation factor GTPase family. EF-Tu/EF-1A subfamily.

It is found in the cytoplasm. It carries out the reaction GTP + H2O = GDP + phosphate + H(+). Functionally, GTP hydrolase that promotes the GTP-dependent binding of aminoacyl-tRNA to the A-site of ribosomes during protein biosynthesis. This Thermococcus celer protein is Elongation factor 1-alpha.